Reading from the N-terminus, the 72-residue chain is Translation initiation factor IF-1 (72 aa).

The 72-residue stretch at 1-72 folds into the S1-like domain; the sequence is MAKEGAIEVE…TRGRIVYRYK (72 aa).

This sequence belongs to the IF-1 family. In terms of assembly, component of the 30S ribosomal translation pre-initiation complex which assembles on the 30S ribosome in the order IF-2 and IF-3, IF-1 and N-formylmethionyl-tRNA(fMet); mRNA recruitment can occur at any time during PIC assembly.

Its subcellular location is the cytoplasm. In terms of biological role, one of the essential components for the initiation of protein synthesis. Stabilizes the binding of IF-2 and IF-3 on the 30S subunit to which N-formylmethionyl-tRNA(fMet) subsequently binds. Helps modulate mRNA selection, yielding the 30S pre-initiation complex (PIC). Upon addition of the 50S ribosomal subunit IF-1, IF-2 and IF-3 are released leaving the mature 70S translation initiation complex. In Corynebacterium efficiens (strain DSM 44549 / YS-314 / AJ 12310 / JCM 11189 / NBRC 100395), this protein is Translation initiation factor IF-1.